Here is a 164-residue protein sequence, read N- to C-terminus: ATP synthase subunit b (164 aa).

The chain crosses the membrane as a helical span at residues 10–30 (LLISQIVNFCLLAFLLNTFLY).

Belongs to the ATPase B chain family. F-type ATPases have 2 components, F(1) - the catalytic core - and F(0) - the membrane proton channel. F(1) has five subunits: alpha(3), beta(3), gamma(1), delta(1), epsilon(1). F(0) has three main subunits: a(1), b(2) and c(10-14). The alpha and beta chains form an alternating ring which encloses part of the gamma chain. F(1) is attached to F(0) by a central stalk formed by the gamma and epsilon chains, while a peripheral stalk is formed by the delta and b chains.

It is found in the cell membrane. In terms of biological role, f(1)F(0) ATP synthase produces ATP from ADP in the presence of a proton or sodium gradient. F-type ATPases consist of two structural domains, F(1) containing the extramembraneous catalytic core and F(0) containing the membrane proton channel, linked together by a central stalk and a peripheral stalk. During catalysis, ATP synthesis in the catalytic domain of F(1) is coupled via a rotary mechanism of the central stalk subunits to proton translocation. Its function is as follows. Component of the F(0) channel, it forms part of the peripheral stalk, linking F(1) to F(0). The sequence is that of ATP synthase subunit b from Herpetosiphon aurantiacus (strain ATCC 23779 / DSM 785 / 114-95).